Consider the following 404-residue polypeptide: Probable tRNA sulfurtransferase (404 aa).

Residues 60 to 165 (QPVAESLKQI…EEAAYISYET (106 aa)) enclose the THUMP domain. ATP-binding positions include 183–184 (ML), 208–209 (HF), R265, G287, and Q296.

The protein belongs to the ThiI family.

It is found in the cytoplasm. The enzyme catalyses [ThiI sulfur-carrier protein]-S-sulfanyl-L-cysteine + a uridine in tRNA + 2 reduced [2Fe-2S]-[ferredoxin] + ATP + H(+) = [ThiI sulfur-carrier protein]-L-cysteine + a 4-thiouridine in tRNA + 2 oxidized [2Fe-2S]-[ferredoxin] + AMP + diphosphate. The catalysed reaction is [ThiS sulfur-carrier protein]-C-terminal Gly-Gly-AMP + S-sulfanyl-L-cysteinyl-[cysteine desulfurase] + AH2 = [ThiS sulfur-carrier protein]-C-terminal-Gly-aminoethanethioate + L-cysteinyl-[cysteine desulfurase] + A + AMP + 2 H(+). It functions in the pathway cofactor biosynthesis; thiamine diphosphate biosynthesis. Functionally, catalyzes the ATP-dependent transfer of a sulfur to tRNA to produce 4-thiouridine in position 8 of tRNAs, which functions as a near-UV photosensor. Also catalyzes the transfer of sulfur to the sulfur carrier protein ThiS, forming ThiS-thiocarboxylate. This is a step in the synthesis of thiazole, in the thiamine biosynthesis pathway. The sulfur is donated as persulfide by IscS. The chain is Probable tRNA sulfurtransferase from Streptococcus gordonii (strain Challis / ATCC 35105 / BCRC 15272 / CH1 / DL1 / V288).